The sequence spans 448 residues: UDP-N-acetylmuramoyl-L-alanine--L-glutamate ligase (448 aa).

Residue 118–124 (GSKGKST) coordinates ATP.

Belongs to the MurCDEF family. MurD2 subfamily.

Its subcellular location is the cytoplasm. It catalyses the reaction UDP-N-acetyl-alpha-D-muramoyl-L-alanine + L-glutamate + ATP = UDP-N-acetyl-alpha-D-muramoyl-L-alanyl-L-glutamate + ADP + phosphate + H(+). It functions in the pathway cell wall biogenesis; peptidoglycan biosynthesis. Cell wall formation. Catalyzes the addition of L-glutamate to the nucleotide precursor UDP-N-acetylmuramoyl-L-alanine. The sequence is that of UDP-N-acetylmuramoyl-L-alanine--L-glutamate ligase from Salinispora tropica (strain ATCC BAA-916 / DSM 44818 / JCM 13857 / NBRC 105044 / CNB-440).